A 475-amino-acid chain; its full sequence is tRNA modification GTPase MnmE (475 aa).

R24, E81, and K124 together coordinate (6S)-5-formyl-5,6,7,8-tetrahydrofolate. A TrmE-type G domain is found at 220–397; the sequence is GLSVVLAGQP…MRSELLRLIG (178 aa). N230 is a binding site for K(+). Residues 230–235, 249–255, 274–277, and 378–380 each bind GTP; these read NVGKSS, TPIAGTT, DTAG, and SAR. S234 serves as a coordination point for Mg(2+). Residues T249, I251, and T254 each coordinate K(+). T255 is a binding site for Mg(2+). A (6S)-5-formyl-5,6,7,8-tetrahydrofolate-binding site is contributed by K475.

It belongs to the TRAFAC class TrmE-Era-EngA-EngB-Septin-like GTPase superfamily. TrmE GTPase family. Homodimer. Heterotetramer of two MnmE and two MnmG subunits. Requires K(+) as cofactor.

The protein resides in the cytoplasm. Functionally, exhibits a very high intrinsic GTPase hydrolysis rate. Involved in the addition of a carboxymethylaminomethyl (cmnm) group at the wobble position (U34) of certain tRNAs, forming tRNA-cmnm(5)s(2)U34. This Cupriavidus metallidurans (strain ATCC 43123 / DSM 2839 / NBRC 102507 / CH34) (Ralstonia metallidurans) protein is tRNA modification GTPase MnmE.